The primary structure comprises 83 residues: UPF0512 protein G (83 aa).

Belongs to the UPF0512 family.

The sequence is that of UPF0512 protein G from Dictyostelium discoideum (Social amoeba).